Here is a 645-residue protein sequence, read N- to C-terminus: Sodium/hydrogen exchanger 9 (645 aa).

Over 1–20 (MERQSRVMSEKDEYQFQHQG) the chain is Lumenal. A helical transmembrane segment spans residues 21-41 (AVELLVFNFLLILTILTIWLF). The Cytoplasmic portion of the chain corresponds to 42–45 (KNHR). A helical transmembrane segment spans residues 46–66 (FRFLHETGGAMVYGLIMGLIL). Residues 67-126 (RYATAPTDIESGTVYDCVKLTFSPSTLLVNITDQVYEYKYKREISQHNINPHQGNAILEK) are Lumenal-facing. The N-linked (GlcNAc...) asparagine glycan is linked to N96. Residues 127 to 147 (MTFDPEIFFNVLLPPIIFHAG) form a helical membrane-spanning segment. The Cytoplasmic segment spans residues 148–164 (YSLKKRHFFQNLGSILT). A helical transmembrane segment spans residues 165-185 (YAFLGTAISCIVIGLIMYGFV). Residues 186–203 (KAMIHAGQLKNGDFHFTD) lie on the Lumenal side of the membrane. Residues 204–224 (CLFFGSLMSATDPVTVLAIFH) traverse the membrane as a helical segment. Over 225–235 (ELHVDPDLYTL) the chain is Cytoplasmic. Residues 236 to 256 (LFGESVLNDAVAIVLTYSISI) form a helical membrane-spanning segment. Residues 257 to 277 (YSPKENPNAFDAAAFFQSVGN) lie on the Lumenal side of the membrane. A helical transmembrane segment spans residues 278-298 (FLGIFAGSFAMGSAYAIITAL). Residues 299-301 (LTK) lie on the Cytoplasmic side of the membrane. The next 2 helical transmembrane spans lie at 302–322 (FTKL…LSWS) and 323–343 (AFLS…FCGV). Residues 344–364 (TQAHYTYNNLSSDSKIRTKQL) lie on the Cytoplasmic side of the membrane. Residues 365 to 385 (FEFMNFLAENVIFCYMGLALF) traverse the membrane as a helical segment. Residue T386 is a topological domain, lumenal. The chain crosses the membrane as a helical span at residues 387 to 407 (FQNHIFNALFILGAFLAIFVA). The Cytoplasmic segment spans residues 408–429 (RACNIYPLSFLLNLGRKQKIPW). The helical transmembrane segment at 430-450 (NFQHMMMFSGLRGAIAFALAI) threads the bilayer. The Lumenal segment spans residues 451-465 (RNTESQPKQMMFTTT). A helical transmembrane segment spans residues 466–486 (LLLVFFTVWVFGGGTTPMLTW). Residues 487–645 (LQIRVGVDLD…EQTLGQSQLN (159 aa)) are Cytoplasmic-facing. The disordered stretch occupies residues 594 to 622 (QASSPCSPPARLGLDQKASPQTPGKENIY).

It belongs to the monovalent cation:proton antiporter 1 (CPA1) transporter (TC 2.A.36) family. As to quaternary structure, homodimer; phosphatidylinositol-4,5-bisphosphate (PIP2) and phosphatidylinositol 3,4,5-trisphosphate (PIP3) could be involved in the dimer stabilization. Interacts (via the C-terminus) with RACK1. Interacts with CHP1. Ubiquitously expressed in all tissues tested. Expressed at highest levels in heart and skeletal muscle, followed by placenta, kidney, and liver. Expressed in the brain, in the medulla and spinal cord.

Its subcellular location is the late endosome membrane. The protein resides in the early endosome membrane. The protein localises to the recycling endosome membrane. It is found in the cell membrane. It localises to the cytoplasmic vesicle. Its subcellular location is the phagosome membrane. It carries out the reaction Na(+)(in) + H(+)(out) = Na(+)(out) + H(+)(in). It catalyses the reaction K(+)(in) + H(+)(out) = K(+)(out) + H(+)(in). Functionally, endosomal Na(+), K(+)/H(+) antiporter. Mediates the electroneutral exchange of endosomal luminal H(+) for a cytosolic Na(+) or K(+). By facilitating proton efflux, SLC9A9 counteracts the acidity generated by vacuolar (V)-ATPase, thereby limiting luminal acidification. Regulates organellar pH and consequently, e.g., endosome maturation and endocytic trafficking of plasma membrane receptors and neurotransporters. Promotes the recycling of transferrin receptors back to the cell surface to facilitate additional iron uptake in the brain. Regulates synaptic transmission by regulating the luminal pH of axonal endosomes. Regulates phagosome lumenal pH, thus affecting phagosome maturation, and consequently, microbicidal activity in macrophages. Can also be active at the cell surface of specialized cells, e.g., in the inner ear hair bundles uses the high K(+) of the endolymph to regulate intracelular pH. This Homo sapiens (Human) protein is Sodium/hydrogen exchanger 9.